Here is a 117-residue protein sequence, read N- to C-terminus: Immunoglobulin kappa variable 1D-12 (117 aa).

The N-terminal stretch at 1 to 22 is a signal peptide; the sequence is MDMMVPAQLLGLLLLWFPGSRC. The tract at residues 23–45 is framework-1; sequence DIQMTQSPSSVSASVGDRVTITC. Residues 24 to 117 form the Ig-like domain; it reads IQMTQSPSSV…YYCQQANSFP (94 aa). Cysteines 45 and 110 form a disulfide. The segment at 46–56 is complementarity-determining-1; it reads RASQGISSWLA. Residues 57-71 form a framework-2 region; that stretch reads WYQQKPGKAPKLLIY. The segment at 72–78 is complementarity-determining-2; the sequence is AASSLQS. Positions 79-110 are framework-3; sequence GVPSRFSGSGSGTDFTLTISSLQPEDFATYYC. The tract at residues 111 to 117 is complementarity-determining-3; it reads QQANSFP.

As to quaternary structure, immunoglobulins are composed of two identical heavy chains and two identical light chains; disulfide-linked.

It localises to the secreted. It is found in the cell membrane. V region of the variable domain of immunoglobulin light chains that participates in the antigen recognition. Immunoglobulins, also known as antibodies, are membrane-bound or secreted glycoproteins produced by B lymphocytes. In the recognition phase of humoral immunity, the membrane-bound immunoglobulins serve as receptors which, upon binding of a specific antigen, trigger the clonal expansion and differentiation of B lymphocytes into immunoglobulins-secreting plasma cells. Secreted immunoglobulins mediate the effector phase of humoral immunity, which results in the elimination of bound antigens. The antigen binding site is formed by the variable domain of one heavy chain, together with that of its associated light chain. Thus, each immunoglobulin has two antigen binding sites with remarkable affinity for a particular antigen. The variable domains are assembled by a process called V-(D)-J rearrangement and can then be subjected to somatic hypermutations which, after exposure to antigen and selection, allow affinity maturation for a particular antigen. The chain is Immunoglobulin kappa variable 1D-12 from Homo sapiens (Human).